The following is a 49-amino-acid chain: MRVGVALACTECKRRNYMTNKNKKNDPDRIELKKYCKWCKTQTVHKETK.

Belongs to the bacterial ribosomal protein bL33 family.

The polypeptide is Large ribosomal subunit protein bL33 (Heliobacterium modesticaldum (strain ATCC 51547 / Ice1)).